We begin with the raw amino-acid sequence, 100 residues long: A-type ATP synthase subunit F (100 aa).

This sequence belongs to the V-ATPase F subunit family. In terms of assembly, has multiple subunits with at least A(3), B(3), C, D, E, F, H, I and proteolipid K(x).

The protein resides in the cell membrane. In terms of biological role, component of the A-type ATP synthase that produces ATP from ADP in the presence of a proton gradient across the membrane. The chain is A-type ATP synthase subunit F from Methanoregula boonei (strain DSM 21154 / JCM 14090 / 6A8).